The sequence spans 284 residues: 2-dehydro-3-deoxyphosphooctonate aldolase (284 aa).

The protein belongs to the KdsA family.

Its subcellular location is the cytoplasm. It carries out the reaction D-arabinose 5-phosphate + phosphoenolpyruvate + H2O = 3-deoxy-alpha-D-manno-2-octulosonate-8-phosphate + phosphate. The protein operates within carbohydrate biosynthesis; 3-deoxy-D-manno-octulosonate biosynthesis; 3-deoxy-D-manno-octulosonate from D-ribulose 5-phosphate: step 2/3. Its pathway is bacterial outer membrane biogenesis; lipopolysaccharide biosynthesis. This chain is 2-dehydro-3-deoxyphosphooctonate aldolase, found in Vibrio vulnificus (strain CMCP6).